The sequence spans 411 residues: MLTKDLSITFCGVKFPNPFCLSSSPVGNCYEMCAKAYDTGWGGVVFKTIGFFIANEVSPRFDHLVKEDTGFIGFKNMEQIAEHPLEENLAALRRLKEDYPDKVLIASIMGENEQQWEELARLVQEAGADMIECNFSCPQMTSHAMGSDVGQSPELVEKYCRAVKRGSTLPMLAKMTPNIGDMCEVALAAKRGGADGIAAINTVKSITNIDLNQKIGMPIVNGKSSISGYSGKAVKPIALRFIQQMRTHPELRDFPISGIGGIETWEDAAEFLLLGAATLQVTTGIMQYGYRIVEDMASGLSHYLADQGFDSLQEMVGLANNNIVPAEDLDRSYIVYPRINLDKCVGCGRCYISCYDGGHQAMEWSEKTRTPHCNTEKCVGCLLCGHVCPVGCIELGEVKFKKGEKEHPVTL.

Residues N76 and 134–136 contribute to the substrate site; that span reads NFS. C137 serves as the catalytic Nucleophile. 201-202 is a binding site for substrate; that stretch reads NT. 4Fe-4S ferredoxin-type domains are found at residues 335–367 and 369–398; these read VYPR…WSEK and RTPH…LGEV. 8 residues coordinate [4Fe-4S] cluster: C344, C347, C350, C354, C378, C381, C384, and C388.

The protein belongs to the dihydropyrimidine dehydrogenase family. As to quaternary structure, heterotetramer of 2 PreA and 2 PreT subunits. [4Fe-4S] cluster is required as a cofactor.

The catalysed reaction is 5,6-dihydrouracil + NAD(+) = uracil + NADH + H(+). It carries out the reaction 5,6-dihydrothymine + NAD(+) = thymine + NADH + H(+). Functionally, involved in pyrimidine base degradation. Catalyzes physiologically the reduction of uracil to 5,6-dihydrouracil (DHU) by using NADH as a specific cosubstrate. It also catalyzes the reverse reaction and the reduction of thymine to 5,6-dihydrothymine (DHT). This is NAD-dependent dihydropyrimidine dehydrogenase subunit PreA (preA) from Escherichia coli O157:H7.